A 905-amino-acid polypeptide reads, in one-letter code: Lateral signaling target protein 2 homolog (905 aa).

Lys-87 is covalently cross-linked (Glycyl lysine isopeptide (Lys-Gly) (interchain with G-Cter in ubiquitin)). Residue Ser-334 is modified to Phosphoserine. Residues 354-441 (DEMSSLLSPP…RGQDGQSGEV (88 aa)) are disordered. Polar residues-rich tracts occupy residues 358–367 (SLLSPPSACQ) and 418–437 (PGNT…QDGQ). Residue Thr-512 is modified to Phosphothreonine. Disordered stretches follow at residues 516-552 (NPKS…DNSH) and 589-691 (PGSV…RGDV). Basic and acidic residues-rich tracts occupy residues 542 to 552 (PRAEGTGDNSH) and 605 to 615 (GGDKEPERIDE). Over residues 647 to 656 (SGPQVDTASR) the composition is skewed to polar residues. Over residues 659–678 (GEGEVKGQPEPEARKQDPEK) the composition is skewed to basic and acidic residues. The FYVE-type zinc-finger motif lies at 835–895 (DEACGFCTSC…VCTHCYMFHV (61 aa)). Zn(2+) is bound by residues Cys-841, Cys-844, Cys-857, Cys-860, Cys-865, Cys-868, and Cys-887. At Thr-888 the chain carries Phosphothreonine; by MAP2K. Cys-890 lines the Zn(2+) pocket.

It belongs to the lst-2 family. Interacts with TRIM3. Post-translationally, monoubiquitination at Lys-87 prevents binding to phosphatidylinositol 3-phosphate (PI3P) and localization to early endosome membranes. As to expression, enriched in brain (at protein level).

The protein resides in the cytoplasm. It is found in the cytosol. The protein localises to the early endosome membrane. Functionally, negative regulator of epidermal growth factor receptor (EGFR) signaling. Acts by promoting EGFR degradation in endosomes when not monoubiquitinated. This is Lateral signaling target protein 2 homolog (Zfyve28) from Mus musculus (Mouse).